The primary structure comprises 549 residues: YTH domain-containing family protein 1 (549 aa).

5 disordered regions span residues 29–102 (QAPW…QPNM), 139–165 (GHPP…RQSG), 243–262 (GASG…QQAV), 273–298 (DSTE…AKGP), and 425–458 (REDS…SENK). A compositionally biased stretch (polar residues) spans 49–61 (VVGQTQSSPQYNG). Over residues 71–102 (QGYYMPQQQQQQQQMPQYYGGPMSPSQPQPNM) the composition is skewed to low complexity. Composition is skewed to polar residues over residues 251 to 260 (TGPSATTPQQ) and 273 to 289 (DSTE…TPTA). In terms of domain architecture, YTH spans 307–513 (DRFFVLKSLT…SVGRRLIGLF (207 aa)).

The protein belongs to the YTHDF family. YTHDF1 subfamily.

Specifically recognizes and binds N6-methyladenosine (m6A)-containing mRNAs, and regulates their stability. M6A is a modification present at internal sites of mRNAs and some non-coding RNAs and plays a role in mRNA stability and processing. Directly interacts with the acid phosphatase APHA mRNA to increase its stability. The polypeptide is YTH domain-containing family protein 1 (Cryphonectria parasitica (strain ATCC 38755 / EP155)).